Reading from the N-terminus, the 524-residue chain is Chromosomal replication initiator protein DnaA (524 aa).

The segment at Met-1–Gln-105 is domain I, interacts with DnaA modulators. A disordered region spans residues Pro-95–Ser-183. The domain II stretch occupies residues Gln-106–Val-182. Residues Ala-148–Asp-158 show a composition bias toward pro residues. A domain III, AAA+ region region spans residues Ser-183–Ser-399. The ATP site is built by Gly-227, Gly-229, Lys-230, and Thr-231. The domain IV, binds dsDNA stretch occupies residues Ser-400–Asn-524.

The protein belongs to the DnaA family. Oligomerizes as a right-handed, spiral filament on DNA at oriC.

It localises to the cytoplasm. Its function is as follows. Plays an essential role in the initiation and regulation of chromosomal replication. ATP-DnaA binds to the origin of replication (oriC) to initiate formation of the DNA replication initiation complex once per cell cycle. Binds the DnaA box (a 9 base pair repeat at the origin) and separates the double-stranded (ds)DNA. Forms a right-handed helical filament on oriC DNA; dsDNA binds to the exterior of the filament while single-stranded (ss)DNA is stabiized in the filament's interior. The ATP-DnaA-oriC complex binds and stabilizes one strand of the AT-rich DNA unwinding element (DUE), permitting loading of DNA polymerase. After initiation quickly degrades to an ADP-DnaA complex that is not apt for DNA replication. Binds acidic phospholipids. This Corynebacterium glutamicum (strain R) protein is Chromosomal replication initiator protein DnaA.